The following is a 751-amino-acid chain: Photosystem I P700 chlorophyll a apoprotein A1 (751 aa).

8 helical membrane-spanning segments follow: residues 73-96 (VFSA…FHGA), 159-182 (LYAT…FHYH), 198-222 (MNHH…HISL), 294-312 (EAHH…GHQY), 349-372 (WHAQ…HHMY), 388-414 (LSLF…IFMV), 436-458 (AIIS…LYIH), and 533-551 (FLVH…LILL). Residues Cys575 and Cys584 each contribute to the [4Fe-4S] cluster site. 2 helical membrane-spanning segments follow: residues 591 to 612 (HVFL…HFSW) and 665 to 687 (LSAY…MFLF). His676 lines the chlorophyll a' pocket. Positions 684 and 692 each coordinate chlorophyll a. Trp693 contacts phylloquinone. Residues 725–745 (AVGVAHYLLGGIATTWSFFLA) form a helical membrane-spanning segment.

It belongs to the PsaA/PsaB family. In terms of assembly, the PsaA/B heterodimer binds the P700 chlorophyll special pair and subsequent electron acceptors. PSI consists of a core antenna complex that captures photons, and an electron transfer chain that converts photonic excitation into a charge separation. The eukaryotic PSI reaction center is composed of at least 11 subunits. P700 is a chlorophyll a/chlorophyll a' dimer, A0 is one or more chlorophyll a, A1 is one or both phylloquinones and FX is a shared 4Fe-4S iron-sulfur center. is required as a cofactor.

It localises to the plastid. Its subcellular location is the chloroplast thylakoid membrane. It carries out the reaction reduced [plastocyanin] + hnu + oxidized [2Fe-2S]-[ferredoxin] = oxidized [plastocyanin] + reduced [2Fe-2S]-[ferredoxin]. PsaA and PsaB bind P700, the primary electron donor of photosystem I (PSI), as well as the electron acceptors A0, A1 and FX. PSI is a plastocyanin/cytochrome c6-ferredoxin oxidoreductase, converting photonic excitation into a charge separation, which transfers an electron from the donor P700 chlorophyll pair to the spectroscopically characterized acceptors A0, A1, FX, FA and FB in turn. Oxidized P700 is reduced on the lumenal side of the thylakoid membrane by plastocyanin or cytochrome c6. The polypeptide is Photosystem I P700 chlorophyll a apoprotein A1 (Oltmannsiellopsis viridis (Marine flagellate)).